The following is a 599-amino-acid chain: Subtilisin-like protease 1 (599 aa).

The first 20 residues, 1 to 20 (MRTVFIYACIISLVLRTIPA), serve as a signal peptide directing secretion. The propeptide at 21-195 (HNDLMSKEKE…VESDELVGAD (175 aa)) is inhibition peptide. An N-linked (GlcNAc...) asparagine glycan is attached at N57. The stretch at 74–101 (EDAPKEELNKIEMEKKKAEEEAKNSKKK) forms a coiled coil. Residues N123, T126, P128, and G183 each contribute to the Ca(2+) site. N-linked (GlcNAc...) asparagine glycosylation is present at N227. Ca(2+) is bound at residue D251. A Peptidase S8 domain is found at 257–574 (QWGLDLARLD…GGYIDILNAV (318 aa)). Intrachain disulfides connect C283–C393 and C372–C389. D286 serves as the catalytic Charge relay system. 9 residues coordinate Ca(2+): D295, E306, D314, D315, D316, N318, I320, D322, and D323. The N-linked (GlcNAc...) asparagine glycan is linked to N331. H342 (charge relay system) is an active-site residue. I353 contacts Ca(2+). N355 is a glycosylation site (N-linked (GlcNAc...) asparagine). Positions 356, 358, and 360 each coordinate Ca(2+). Residues N402 and N434 are each glycosylated (N-linked (GlcNAc...) asparagine). A disulfide bond links C435 and C448. Catalysis depends on S519, which acts as the Charge relay system.

This sequence belongs to the peptidase S8 family. Post-translationally, the N-terminal prodomain is cleaved.

The protein resides in the secreted. It localises to the parasitophorous vacuole lumen. The protein localises to the cytoplasmic vesicle. Its subcellular location is the secretory vesicle. The enzyme catalyses Hydrolysis of proteins with broad specificity for peptide bonds, and a preference for a large uncharged residue in P1. Hydrolyzes peptide amides.. Its function is as follows. Mediates the proteolytic maturation of serine protease SERA3. Mediates the proteolytic maturation of MSP1, and thereby may prime the parasite cell surface for invasion of fresh erythrocytes. Required for completion of the parasite pre-erythrocytic stages. Required for hepatic schizont development and merozoite formation. Required for the egress of the hepatic merozoites from the parasitophorous vacuole. Required for parasite infectivity during blood stages. Required for male gamete egress. The chain is Subtilisin-like protease 1 from Plasmodium berghei (strain Anka).